A 664-amino-acid chain; its full sequence is Exoribonuclease 2 (664 aa).

An RNB domain is found at 193–521 (RIDMTHIPFV…INHRMLKALI (329 aa)). Residues 568 to 650 (QTLFTGEIFD…ENRSLVAKPT (83 aa)) enclose the S1 motif domain.

It belongs to the RNR ribonuclease family. RNase II subfamily.

Its subcellular location is the cytoplasm. It catalyses the reaction Exonucleolytic cleavage in the 3'- to 5'-direction to yield nucleoside 5'-phosphates.. Functionally, involved in mRNA degradation. Hydrolyzes single-stranded polyribonucleotides processively in the 3' to 5' direction. The protein is Exoribonuclease 2 of Vibrio vulnificus (strain YJ016).